The following is a 231-amino-acid chain: uncharacterized protein (231 aa).

7 helical membrane passes run 26–46 (TYSW…LTAQ), 56–76 (SLRL…SMFA), 84–104 (AGAL…ALLF), 112–132 (ITAF…GFVI), 142–162 (FFLF…FVGS), 163–183 (SALS…LTAY), and 206–226 (INGA…LLNI).

The protein belongs to the BI1 family.

The protein resides in the cell membrane. This is an uncharacterized protein from Deinococcus radiodurans (strain ATCC 13939 / DSM 20539 / JCM 16871 / CCUG 27074 / LMG 4051 / NBRC 15346 / NCIMB 9279 / VKM B-1422 / R1).